The sequence spans 167 residues: Translationally-controlled tumor protein homolog (167 aa).

In terms of domain architecture, TCTP spans 1–167; the sequence is MIIYTDIISG…WKHGVKAEKI (167 aa).

It belongs to the TCTP family.

The protein resides in the cytoplasm. The protein localises to the cytoskeleton. Involved in protein synthesis. Involved in microtubule stabilization. The polypeptide is Translationally-controlled tumor protein homolog (Kluyveromyces lactis (strain ATCC 8585 / CBS 2359 / DSM 70799 / NBRC 1267 / NRRL Y-1140 / WM37) (Yeast)).